The chain runs to 309 residues: Cytochrome c biogenesis protein CcsA (309 aa).

The next 8 helical transmembrane spans lie at 18 to 38 (LGLLVFYFLLINLPISLGAVF), 43 to 63 (SFAVRLITILVNLLITLQLLF), 73 to 93 (ISNLYESLYFLAWGITLGQLL), 102 to 122 (IIPSIAIPIELLIVSFACFVL), 148 to 168 (VMLSYAALIIGSLLSMSVLFI), 216 to 236 (SILIGFVLLTLGLISGAVWAN), 250 to 267 (TWAFISWLFYAAYLHMRI), and 279 to 299 (LASTGFLVVLVCYLGVNFLGI).

Belongs to the CcmF/CycK/Ccl1/NrfE/CcsA family. In terms of assembly, may interact with ccs1.

Its subcellular location is the cellular thylakoid membrane. Its function is as follows. Required during biogenesis of c-type cytochromes (cytochrome c6 and cytochrome f) at the step of heme attachment. This chain is Cytochrome c biogenesis protein CcsA, found in Prochlorococcus marinus (strain MIT 9301).